A 331-amino-acid chain; its full sequence is Hyaluronidase B (331 aa).

Cystine bridges form between C19–C308 and C185–C197. Residue N79 is glycosylated (N-linked (GlcNAc...) asparagine). Catalysis depends on E109, which acts as the Proton donor.

It belongs to the glycosyl hydrolase 56 family. As to expression, expressed by the venom gland.

The protein localises to the secreted. It catalyses the reaction Random hydrolysis of (1-&gt;4)-linkages between N-acetyl-beta-D-glucosamine and D-glucuronate residues in hyaluronate.. Hydrolyzes high molecular weight hyaluronic acid to produce small oligosaccharides. This Vespa velutina (Asian yellow-legged hornet) protein is Hyaluronidase B.